The chain runs to 522 residues: Peptide methionine sulfoxide reductase MsrA/MsrB (522 aa).

Positions 17–174 constitute a Thioredoxin domain; sequence LALGACSPKI…ALALIRDPNA (158 aa). C68 and C71 are oxidised to a cystine. The peptide methionine sulfoxide reductase A stretch occupies residues 199–354; the sequence is RTIYLAGGCF…PNGYCHIDIR (156 aa). Residue C207 is part of the active site. The MsrB domain maps to 383–506; it reads DAELKRTLTE…NGASLKFIPL (124 aa). C440 and C495 are joined by a disulfide. The active-site Nucleophile is the C495.

It in the N-terminal section; belongs to the thioredoxin family. In the central section; belongs to the MsrA Met sulfoxide reductase family. The protein in the C-terminal section; belongs to the MsrB Met sulfoxide reductase family.

It carries out the reaction L-methionyl-[protein] + [thioredoxin]-disulfide + H2O = L-methionyl-(S)-S-oxide-[protein] + [thioredoxin]-dithiol. The enzyme catalyses [thioredoxin]-disulfide + L-methionine + H2O = L-methionine (S)-S-oxide + [thioredoxin]-dithiol. The catalysed reaction is L-methionyl-[protein] + [thioredoxin]-disulfide + H2O = L-methionyl-(R)-S-oxide-[protein] + [thioredoxin]-dithiol. Its function is as follows. Has an important function as a repair enzyme for proteins that have been inactivated by oxidation. Catalyzes the reversible oxidation-reduction of methionine sulfoxide in proteins to methionine. The polypeptide is Peptide methionine sulfoxide reductase MsrA/MsrB (msrAB) (Neisseria meningitidis serogroup A / serotype 4A (strain DSM 15465 / Z2491)).